An 86-amino-acid chain; its full sequence is Small ribosomal subunit protein uS17 (86 aa).

The protein belongs to the universal ribosomal protein uS17 family. In terms of assembly, part of the 30S ribosomal subunit.

One of the primary rRNA binding proteins, it binds specifically to the 5'-end of 16S ribosomal RNA. The polypeptide is Small ribosomal subunit protein uS17 (Lactococcus lactis subsp. cremoris (strain SK11)).